A 477-amino-acid chain; its full sequence is Bifunctional protein HldE (477 aa).

Residues 1–318 (MKVTLPEFER…ENAVRGRADT (318 aa)) are ribokinase. At Lys179 the chain carries N6-acetyllysine. 195–198 (NLSE) is a binding site for ATP. The active site involves Asp264. A cytidylyltransferase region spans residues 344–477 (MTNGVFDILH…IKKIQQDKKG (134 aa)).

This sequence in the N-terminal section; belongs to the carbohydrate kinase PfkB family. In the C-terminal section; belongs to the cytidylyltransferase family. In terms of assembly, homodimer.

The catalysed reaction is D-glycero-beta-D-manno-heptose 7-phosphate + ATP = D-glycero-beta-D-manno-heptose 1,7-bisphosphate + ADP + H(+). It catalyses the reaction D-glycero-beta-D-manno-heptose 1-phosphate + ATP + H(+) = ADP-D-glycero-beta-D-manno-heptose + diphosphate. Its pathway is nucleotide-sugar biosynthesis; ADP-L-glycero-beta-D-manno-heptose biosynthesis; ADP-L-glycero-beta-D-manno-heptose from D-glycero-beta-D-manno-heptose 7-phosphate: step 1/4. The protein operates within nucleotide-sugar biosynthesis; ADP-L-glycero-beta-D-manno-heptose biosynthesis; ADP-L-glycero-beta-D-manno-heptose from D-glycero-beta-D-manno-heptose 7-phosphate: step 3/4. Catalyzes the phosphorylation of D-glycero-D-manno-heptose 7-phosphate at the C-1 position to selectively form D-glycero-beta-D-manno-heptose-1,7-bisphosphate. Its function is as follows. Catalyzes the ADP transfer from ATP to D-glycero-beta-D-manno-heptose 1-phosphate, yielding ADP-D-glycero-beta-D-manno-heptose. In Escherichia coli (strain 55989 / EAEC), this protein is Bifunctional protein HldE.